We begin with the raw amino-acid sequence, 334 residues long: Ketol-acid reductoisomerase (NADP(+)) (334 aa).

The KARI N-terminal Rossmann domain occupies 3–183 (ATIYYENDAD…GGTRGGVIET (181 aa)). Residues 26–29 (YGSQ), R49, S52, and 84–87 (DEVQ) contribute to the NADP(+) site. Residue H109 is part of the active site. NADP(+) is bound at residue G135. A KARI C-terminal knotted domain is found at 184-329 (TFAEETETDL…LGLRRMMNWI (146 aa)). 4 residues coordinate Mg(2+): D192, E196, E228, and E232. Residue S253 participates in substrate binding.

Belongs to the ketol-acid reductoisomerase family. It depends on Mg(2+) as a cofactor.

The enzyme catalyses (2R)-2,3-dihydroxy-3-methylbutanoate + NADP(+) = (2S)-2-acetolactate + NADPH + H(+). It carries out the reaction (2R,3R)-2,3-dihydroxy-3-methylpentanoate + NADP(+) = (S)-2-ethyl-2-hydroxy-3-oxobutanoate + NADPH + H(+). It functions in the pathway amino-acid biosynthesis; L-isoleucine biosynthesis; L-isoleucine from 2-oxobutanoate: step 2/4. The protein operates within amino-acid biosynthesis; L-valine biosynthesis; L-valine from pyruvate: step 2/4. In terms of biological role, involved in the biosynthesis of branched-chain amino acids (BCAA). Catalyzes an alkyl-migration followed by a ketol-acid reduction of (S)-2-acetolactate (S2AL) to yield (R)-2,3-dihydroxy-isovalerate. In the isomerase reaction, S2AL is rearranged via a Mg-dependent methyl migration to produce 3-hydroxy-3-methyl-2-ketobutyrate (HMKB). In the reductase reaction, this 2-ketoacid undergoes a metal-dependent reduction by NADPH to yield (R)-2,3-dihydroxy-isovalerate. This Rhodopirellula baltica (strain DSM 10527 / NCIMB 13988 / SH1) protein is Ketol-acid reductoisomerase (NADP(+)).